Here is a 196-residue protein sequence, read N- to C-terminus: Putative HTH-type transcriptional regulator in exeN 3'region (196 aa).

Residues 120–185 (ASVGGDRLTR…ELFNLFLNHL (66 aa)) enclose the HTH luxR-type domain. A DNA-binding region (H-T-H motif) is located at residues 144–163 (TEAIAAALGIGNGTVKNHRK).

This Aeromonas salmonicida protein is Putative HTH-type transcriptional regulator in exeN 3'region.